The sequence spans 515 residues: Na(+)/H(+) antiporter NhaB (515 aa).

11 consecutive transmembrane segments (helical) span residues 23–43 (LAIIIFLIINPLIFFFINPFV), 45–65 (GWLLVIEFIFTLAMALKCYPL), 96–116 (VVLLLIFMVAGIYFMKQLLLF), 136–156 (CLASAFLSAFLDALTVIAVVI), 204–224 (LMMHAGVGTALGGVMTMVGEP), 245–265 (APITLPVFICGLLVCFLVEHF), 305–325 (ALIGIWLIVALAFHLAEVGLI), 349–369 (FEEALPFTALLTVFFSIVAVI), 393–413 (LFYLFNGLLSSVSDNVFVGTV), 449–469 (ATPNGQAAFLFLLTSTLSPLI), and 480–500 (ALPYTIVMTLVGLLCVEFLLI).

The protein belongs to the NhaB Na(+)/H(+) (TC 2.A.34) antiporter family.

Its subcellular location is the cell inner membrane. It catalyses the reaction 2 Na(+)(in) + 3 H(+)(out) = 2 Na(+)(out) + 3 H(+)(in). In terms of biological role, na(+)/H(+) antiporter that extrudes sodium in exchange for external protons. The polypeptide is Na(+)/H(+) antiporter NhaB (Photorhabdus laumondii subsp. laumondii (strain DSM 15139 / CIP 105565 / TT01) (Photorhabdus luminescens subsp. laumondii)).